The following is a 428-amino-acid chain: Keratin, type I cytoskeletal 18-A (428 aa).

The tract at residues 2-78 (SFRSQTSSTT…SVKGSGLFNN (77 aa)) is head. Positions 79–114 (EKETMQILNDRLASYLETVRNLEQANSKLELQIRET) are coil 1A. Residues 79–390 (EKETMQILND…RLLDGEDFRL (312 aa)) enclose the IF rod domain. Residues 115–131 (LEKRGPTTQDYSAYEKV) are linker 1. The tract at residues 132–223 (VEDLKSQIYD…RSHQTDVEEL (92 aa)) is coil 1B. The tract at residues 224 to 247 (RKHISECGVQVDVDAPKGQDLSKI) is linker 12. Residues 248 to 385 (MEEIRAQYET…IATYRRLLDG (138 aa)) form a coil 2 region. The tract at residues 386 to 428 (EDFRLQDALAVQTTKVQKKITVTETVVDGKVVSQSSEVQEIKK) is tail.

Belongs to the intermediate filament family. Heterotetramer of two type I and two type II keratins. Keratin-18 associates with keratin-8. Post-translationally, phosphorylated. In terms of processing, proteolytically cleaved by caspases during epithelial cell apoptosis.

Its function is as follows. When phosphorylated, plays a role in filament reorganization. The chain is Keratin, type I cytoskeletal 18-A from Polypterus senegalus (Senegal bichir).